We begin with the raw amino-acid sequence, 210 residues long: Putative 4-hydroxy-4-methyl-2-oxoglutarate aldolase (210 aa).

Substrate contacts are provided by residues 87-90 and Arg-109; that span reads GDFV. Asp-110 provides a ligand contact to a divalent metal cation.

It belongs to the class II aldolase/RraA-like family. As to quaternary structure, homotrimer. It depends on a divalent metal cation as a cofactor.

It catalyses the reaction 4-hydroxy-4-methyl-2-oxoglutarate = 2 pyruvate. The enzyme catalyses oxaloacetate + H(+) = pyruvate + CO2. Functionally, catalyzes the aldol cleavage of 4-hydroxy-4-methyl-2-oxoglutarate (HMG) into 2 molecules of pyruvate. Also contains a secondary oxaloacetate (OAA) decarboxylase activity due to the common pyruvate enolate transition state formed following C-C bond cleavage in the retro-aldol and decarboxylation reactions. This Halalkalibacterium halodurans (strain ATCC BAA-125 / DSM 18197 / FERM 7344 / JCM 9153 / C-125) (Bacillus halodurans) protein is Putative 4-hydroxy-4-methyl-2-oxoglutarate aldolase.